A 450-amino-acid polypeptide reads, in one-letter code: C4-dicarboxylate transport protein (450 aa).

9 consecutive transmembrane segments (helical) span residues 10–30, 46–66, 78–98, 143–163, 190–210, 224–244, 291–311, 332–352, and 354–374; these read SLYFQVIVAIVIGILIGHFYP, LIKMVIAPIIFCTVVSGIAGM, YALLYFEIVSTIALLIGLIVV, IVGAFANGDILQVLMFSVIFG, IINMIMKLAPLGAFGAMAFTI, LMICFYITCALFVVFVLGAIA, VVGLVIPTGYSFNLDGTSIYL, ITLLLVLLLSSKGAAGVTGSG, and IVLAATLSAVGHLPVAGLALI. The tract at residues 428–450 is disordered; sequence PEDDLGVAEGPTPGAAVNTTKTV.

Belongs to the dicarboxylate/amino acid:cation symporter (DAACS) (TC 2.A.23) family.

It is found in the cell inner membrane. Its function is as follows. Responsible for the transport of dicarboxylates such as succinate, fumarate, and malate from the periplasm across the membrane. The sequence is that of C4-dicarboxylate transport protein from Pseudomonas syringae pv. syringae (strain B728a).